Consider the following 180-residue polypeptide: Protein Flattop (180 aa).

Positions 111-180 (PQISGKASGK…AGDKVLQAQS (70 aa)) are disordered.

This sequence belongs to the Flattop family.

The protein localises to the cytoplasm. Its subcellular location is the cytoskeleton. The protein resides in the cilium basal body. It localises to the cell projection. It is found in the cilium. The protein localises to the apical cell membrane. Its subcellular location is the cilium axoneme. In terms of biological role, microtubule inner protein (MIP) part of the dynein-decorated doublet microtubules (DMTs) in cilia axoneme. Acts as a regulator of cilium basal body docking and positioning in mono- and multiciliated cells. Regulates basal body docking and cilia formation in multiciliated lung cells. Regulates kinocilium positioning and stereocilia bundle morphogenesis in the inner ear. This Xenopus laevis (African clawed frog) protein is Protein Flattop.